The following is a 140-amino-acid chain: ATP synthase epsilon chain (140 aa).

This sequence belongs to the ATPase epsilon chain family. F-type ATPases have 2 components, CF(1) - the catalytic core - and CF(0) - the membrane proton channel. CF(1) has five subunits: alpha(3), beta(3), gamma(1), delta(1), epsilon(1). CF(0) has three main subunits: a, b and c.

The protein resides in the cell inner membrane. Its function is as follows. Produces ATP from ADP in the presence of a proton gradient across the membrane. This chain is ATP synthase epsilon chain, found in Marinobacter nauticus (strain ATCC 700491 / DSM 11845 / VT8) (Marinobacter aquaeolei).